A 277-amino-acid chain; its full sequence is 3-methyl-2-oxobutanoate hydroxymethyltransferase (277 aa).

Positions 43 and 82 each coordinate Mg(2+). 3-methyl-2-oxobutanoate-binding positions include 43–44, D82, and K112; that span reads DS. E114 contacts Mg(2+). Catalysis depends on E181, which acts as the Proton acceptor.

It belongs to the PanB family. As to quaternary structure, homodecamer; pentamer of dimers. Mg(2+) serves as cofactor.

Its subcellular location is the cytoplasm. It catalyses the reaction 3-methyl-2-oxobutanoate + (6R)-5,10-methylene-5,6,7,8-tetrahydrofolate + H2O = 2-dehydropantoate + (6S)-5,6,7,8-tetrahydrofolate. Its pathway is cofactor biosynthesis; (R)-pantothenate biosynthesis; (R)-pantoate from 3-methyl-2-oxobutanoate: step 1/2. Its function is as follows. Catalyzes the reversible reaction in which hydroxymethyl group from 5,10-methylenetetrahydrofolate is transferred onto alpha-ketoisovalerate to form ketopantoate. The protein is 3-methyl-2-oxobutanoate hydroxymethyltransferase of Listeria monocytogenes serovar 1/2a (strain ATCC BAA-679 / EGD-e).